The following is a 103-amino-acid chain: Large ribosomal subunit protein bL21 (103 aa).

This sequence belongs to the bacterial ribosomal protein bL21 family. Part of the 50S ribosomal subunit. Contacts protein L20.

In terms of biological role, this protein binds to 23S rRNA in the presence of protein L20. The chain is Large ribosomal subunit protein bL21 from Mycobacterium marinum (strain ATCC BAA-535 / M).